We begin with the raw amino-acid sequence, 459 residues long: Serine protease HTRA3 (459 aa).

An N-terminal signal peptide occupies residues 1-23 (MQARALLPATLAILATLAVLALA). Positions 27–90 (PAAPCPARCD…ECVRGVCRCR (64 aa)) constitute an IGFBP N-terminal domain. 8 disulfide bridges follow: C31–C54, C35–C56, C40–C57, C45–C60, C68–C82, C76–C87, C89–C107, and C96–C132. The Kazal-like domain maps to 76–134 (CGDSLECVRGVCRCRWTHTVCGTDGHTYADVCALQAASRRALQVSGTPVRQLQKGACPS). The serine protease stretch occupies residues 181–347 (GSGFIMSEAG…IPSDRITRFL (167 aa)). Residues H197, D233, and S311 each act as charge relay system in the active site. The PDZ domain maps to 365–450 (IRMRTITPSL…EVRRGNDDLL (86 aa)).

It belongs to the peptidase S1C family. Homotrimer. Interacts with MYH9. Interacts with TGFB1; the interaction inhibits TGFB-mediated signaling. Interacts with BMP4; the interaction inhibits BMP4-mediated signaling. Interacts with TGFB2 and GDF5. As to expression, highest level of isoform 1 in maternal part of the placenta, moderate level in heart, testis and ovary, low level in muscle and lung. High expression found in granulosa cells of the ovary. Expressed in bone matrix, particularly in articular chondrocytes. Very low level of isoform 2 expressed in placenta. Expressed in the bone matrix, particularly in articular chondrocytes.

It localises to the secreted. Serine protease that cleaves beta-casein/CSN2 as well as several extracellular matrix (ECM) proteoglycans such as decorin/DCN, biglycan/BGN and fibronectin/FN1. Inhibits signaling mediated by TGF-beta family proteins possibly indirectly by degradation of these ECM proteoglycans. May act as a tumor suppressor. Negatively regulates, in vitro, trophoblast invasion during placental development and may be involved in the development of the placenta in vivo. May also have a role in ovarian development, granulosa cell differentiation and luteinization. This chain is Serine protease HTRA3 (Htra3), found in Mus musculus (Mouse).